The following is a 101-amino-acid chain: Small ribosomal subunit protein uS14 (101 aa).

It belongs to the universal ribosomal protein uS14 family. As to quaternary structure, part of the 30S ribosomal subunit. Contacts proteins S3 and S10.

Its function is as follows. Binds 16S rRNA, required for the assembly of 30S particles and may also be responsible for determining the conformation of the 16S rRNA at the A site. The protein is Small ribosomal subunit protein uS14 of Hydrogenovibrio crunogenus (strain DSM 25203 / XCL-2) (Thiomicrospira crunogena).